The following is a 749-amino-acid chain: MEHTYQYAWIIPFLPLPIPMLLGVGLLLFPTATKNLRRMWSFTSVLLLSIVMTFSVNLSIHQINSSSIYQYVWSWTINNDFSLEFGYLIDPLTSIMSILITTVGIMVLIYSDNYMSHDQGYLRFFAYMSFFNASMLGLVTSSNLIQIYIFWELVGMCSYLLIGFWFTRPIAANACQKAFVTNRVGDFGLLLGILGLYWITGSFEFRDLFEIFNNLIYNYNNGTNFLFVSLCALFLFVGAVAKSAQFPLHVWLPDAMEGPTPISALIHAATMVAAGIFLVARLFPLFIVIPYIMNLISLIGIITILLGATLALAQKDIKKSLAYSTMSQLGYTMLALGMGSYRAALFHLITHAYSKALLFLGSGSIIHSMEAIVGYSPDKSQNMVLMGGLTKHVPITKNTFLLGTLSLCGIPPLACFWSKDEILNDSWLYSPIFAIIACLTAGLTAFYMFRIYLLTFEGYFNVHCKNYSGKKSSLFYSISLWGKEGQKTIKKKIRLLTLLTTNNNENEKASFFSKKVYRLDSNVRKMTRPFITINQFDNKNTFLYPQESDNTMLFPLFALALFTLFVGAIGIPFNQERMDFDILSKWLNPATNLLHKNLNNYGDWYEFVINAIFSVSISYFGIFLASLLYNPVYSSLQNLDLINSVAKKVPKRIFWDKIINKVYNWSYNRGYIDAFYETSLTKGIRGLAELTHFFDGRVIDGITNGVGVTSFFVGESIKYVGGGRISSYLFLYLSSVSILLLISYFFLNQ.

16 helical membrane-spanning segments follow: residues 9 to 29, 40 to 60, 89 to 109, 125 to 145, 147 to 167, 185 to 205, 221 to 241, 260 to 280, 285 to 305, 329 to 349, 356 to 376, 398 to 418, 427 to 447, 553 to 573, 607 to 627, and 727 to 747; these read WIIP…LLLF, WSFT…NLSI, IDPL…MVLI, FAYM…SNLI, IYIF…FWFT, GDFG…SFEF, NGTN…GAVA, TPIS…FLVA, LFIV…ITIL, LGYT…FHLI, ALLF…VGYS, NTFL…CFWS, WLYS…TAFY, LFPL…GIPF, FVIN…LASL, and SYLF…YFFL.

Belongs to the complex I subunit 5 family. In terms of assembly, NDH is composed of at least 16 different subunits, 5 of which are encoded in the nucleus.

The protein resides in the plastid. It is found in the chloroplast thylakoid membrane. The catalysed reaction is a plastoquinone + NADH + (n+1) H(+)(in) = a plastoquinol + NAD(+) + n H(+)(out). It carries out the reaction a plastoquinone + NADPH + (n+1) H(+)(in) = a plastoquinol + NADP(+) + n H(+)(out). In terms of biological role, NDH shuttles electrons from NAD(P)H:plastoquinone, via FMN and iron-sulfur (Fe-S) centers, to quinones in the photosynthetic chain and possibly in a chloroplast respiratory chain. The immediate electron acceptor for the enzyme in this species is believed to be plastoquinone. Couples the redox reaction to proton translocation, and thus conserves the redox energy in a proton gradient. The polypeptide is NAD(P)H-quinone oxidoreductase subunit 5, chloroplastic (ndhF) (Vitis vinifera (Grape)).